The primary structure comprises 201 residues: Holliday junction resolvase RecU (201 aa).

Mg(2+)-binding residues include threonine 85, aspartate 87, glutamate 100, and glutamine 119.

Belongs to the RecU family. Mg(2+) is required as a cofactor.

It localises to the cytoplasm. The enzyme catalyses Endonucleolytic cleavage at a junction such as a reciprocal single-stranded crossover between two homologous DNA duplexes (Holliday junction).. Its function is as follows. Endonuclease that resolves Holliday junction intermediates in genetic recombination. Cleaves mobile four-strand junctions by introducing symmetrical nicks in paired strands. Promotes annealing of linear ssDNA with homologous dsDNA. Required for DNA repair, homologous recombination and chromosome segregation. The protein is Holliday junction resolvase RecU of Geobacillus sp. (strain WCH70).